The sequence spans 519 residues: Transcription factor STP1 (519 aa).

The interval 16-35 (IPGKIYAFFRELVSGVIISK) is i. The span at 47 to 61 (ATKEEGKDAADEEKT) shows a compositional bias: basic and acidic residues. Disordered regions lie at residues 47–69 (ATKE…FPES) and 115–150 (LLGS…EHST). Residues 65-97 (LFPESNNIDRSLNGGCSVIPCSMDVSDLNTPIS) form an II region. Positions 131–146 (STGVTSSPLSPSGSTP) are enriched in low complexity. The C2H2-type 1 zinc finger occupies 160 to 182 (FICHYCDATFRIRGYLTRHIKKH). The C2H2-type 2; atypical zinc finger occupies 188–223 (YHCPFFNSATPPDLRCHNSGGFSRRDTYKTHLKARH). The C2H2-type 3; atypical zinc finger occupies 240 to 265 (GHCAQCGEYFSTIENFVENHIESGDC). The disordered stretch occupies residues 357 to 382 (IKKKQQQVSGSTVTTPEVATQNNQEV). Positions 364–381 (VSGSTVTTPEVATQNNQE) are enriched in polar residues.

Interacts (via Region II) with SSY5; protease component of the SPS-sensor. Post-translationally, phosphorylated by casein kinase I. Phosphorylation is not dependent on the extracellular amino acid levels, but is a prerequisite for proteolytic processing. Activated by the amino acid-induced proteolytic removal of an N-terminal inhibitory domain by serine protease SSY5, an intrinsic component of the SPS-sensor. Processing requires at least 2 components of the SCF(GRR1) ubiquitin ligase complex, namely the F-box protein GRR1 and the E2 enzyme CDC34, but does not depend on the proteasome. Processing is negatively regulated by the protein phosphatase 2A regulatory subunit RTS1.

The protein resides in the cell membrane. Its subcellular location is the nucleus. Its function is as follows. Transcription factor involved in the regulation of gene expression in response to extracellular amino acid levels. Synthesized as latent cytoplasmic precursor, which, upon a signal initiated by the plasma membrane SPS (SSY1-PTR3-SSY5) amino acid sensor system, becomes proteolytically activated and relocates to the nucleus, where it induces the expression of SPS-sensor-regulated genes, including the amino-acid permeases AGP1, BAP2, BAP3 and GNP1. Binding to promoters is facilitated by DAL81. Involved in the repression of genes subject to nitrogen catabolite repression and genes involved in stress response. Negatively regulated by inner nuclear membrane proteins ASI1, ASI2 and ASI3, which prevent unprocessed precursor forms that escape cytoplasmic anchoring from inducing SPS-sensor-regulated genes. May be involved in pre-tRNA splicing. The polypeptide is Transcription factor STP1 (STP1) (Saccharomyces cerevisiae (strain RM11-1a) (Baker's yeast)).